The chain runs to 469 residues: 3-isopropylmalate dehydratase large subunit (469 aa).

Cysteine 350, cysteine 410, and cysteine 413 together coordinate [4Fe-4S] cluster.

The protein belongs to the aconitase/IPM isomerase family. LeuC type 1 subfamily. In terms of assembly, heterodimer of LeuC and LeuD. Requires [4Fe-4S] cluster as cofactor.

It catalyses the reaction (2R,3S)-3-isopropylmalate = (2S)-2-isopropylmalate. It functions in the pathway amino-acid biosynthesis; L-leucine biosynthesis; L-leucine from 3-methyl-2-oxobutanoate: step 2/4. Catalyzes the isomerization between 2-isopropylmalate and 3-isopropylmalate, via the formation of 2-isopropylmaleate. The sequence is that of 3-isopropylmalate dehydratase large subunit from Rhizobium meliloti (strain 1021) (Ensifer meliloti).